Consider the following 263-residue polypeptide: MSRLTAEAISLSFEQRGQRRAILRDLSLGLAKGESLVVLGPSGCGKSTLLNILAGFQTPDQGRVQIDGRTLEGPGGERGVVFQDDALMPWLNALDNVALGLRIRGLGKAERTARARQVLQLVGLQEYAEQSVAELSGGQRQRLGLARALAVEPDFLLLDEPFGALDALTRERMQVLLLDLWKQTGKGLFLITHSVDEALFLATDLVVMDGPPARIVKRLPVDFARRYAAGETVRSIKSDPEFGRLRQALLDEFLDVAEAEHAH.

Residues 4 to 235 (LTAEAISLSF…RYAAGETVRS (232 aa)) form the ABC transporter domain. 40–47 (GPSGCGKS) provides a ligand contact to ATP.

This sequence belongs to the ABC transporter superfamily. Taurine importer (TC 3.A.1.17.1) family. In terms of assembly, the complex is composed of two ATP-binding proteins (TauB), two transmembrane proteins (TauC) and a solute-binding protein (TauA).

The protein localises to the cell inner membrane. The enzyme catalyses taurine(out) + ATP + H2O = taurine(in) + ADP + phosphate + H(+). Part of the ABC transporter complex TauABC involved in taurine import. Responsible for energy coupling to the transport system. The protein is Taurine import ATP-binding protein TauB of Pseudomonas aeruginosa (strain UCBPP-PA14).